The sequence spans 280 residues: Polyamine aminopropyltransferase (280 aa).

One can recognise a PABS domain in the interval 3 to 237 (DVYFMERDPY…YWWSFSVGSK (235 aa)). Residue Gln33 participates in S-methyl-5'-thioadenosine binding. Residues His64 and Asp88 each coordinate spermidine. S-methyl-5'-thioadenosine contacts are provided by residues Asp108 and 139 to 140 (DG). Catalysis depends on Asp157, which acts as the Proton acceptor. 157–160 (DSTD) contacts spermidine.

It belongs to the spermidine/spermine synthase family. In terms of assembly, homodimer or homotetramer.

The protein resides in the cytoplasm. The enzyme catalyses S-adenosyl 3-(methylsulfanyl)propylamine + putrescine = S-methyl-5'-thioadenosine + spermidine + H(+). Its pathway is amine and polyamine biosynthesis; spermidine biosynthesis; spermidine from putrescine: step 1/1. In terms of biological role, catalyzes the irreversible transfer of a propylamine group from the amino donor S-adenosylmethioninamine (decarboxy-AdoMet) to putrescine (1,4-diaminobutane) to yield spermidine. This is Polyamine aminopropyltransferase from Hydrogenobaculum sp. (strain Y04AAS1).